Reading from the N-terminus, the 126-residue chain is UPF0538 protein C2orf76 homolog (126 aa).

Belongs to the UPF0538 family.

The sequence is that of UPF0538 protein C2orf76 homolog from Pongo abelii (Sumatran orangutan).